The following is a 220-amino-acid chain: Mediator of RNA polymerase II transcription subunit 7 (220 aa).

This sequence belongs to the Mediator complex subunit 7 family. In terms of assembly, component of the Mediator complex. Interacts with MED21.

Its subcellular location is the nucleus. Functionally, component of the Mediator complex, a coactivator involved in the regulated transcription of nearly all RNA polymerase II-dependent genes. Mediator functions as a bridge to convey information from gene-specific regulatory proteins to the basal RNA polymerase II transcription machinery. Mediator is recruited to promoters by direct interactions with regulatory proteins and serves as a scaffold for the assembly of a functional preinitiation complex with RNA polymerase II and the general transcription factors. Required for activated transcription of the MtnA, MtnB and MtnD genes. This Drosophila melanogaster (Fruit fly) protein is Mediator of RNA polymerase II transcription subunit 7 (MED7).